Here is a 102-residue protein sequence, read N- to C-terminus: SITWLFATTLFIGYMPIHCPSETDTDSVFLQDGVSFIIYKFTYTTPPSPVPAVFIKHNVGSPRESRVRVPDMGSSPVAAELLHPSPAPMPPATHGRSAAPCS.

The segment at 79-102 is disordered; sequence AELLHPSPAPMPPATHGRSAAPCS.

This is an uncharacterized protein from Homo sapiens (Human).